A 196-amino-acid chain; its full sequence is Peptidyl-tRNA hydrolase (196 aa).

Position 21 (tyrosine 21) interacts with tRNA. Histidine 26 (proton acceptor) is an active-site residue. The tRNA site is built by phenylalanine 72, asparagine 74, and asparagine 120.

This sequence belongs to the PTH family. As to quaternary structure, monomer.

It is found in the cytoplasm. It catalyses the reaction an N-acyl-L-alpha-aminoacyl-tRNA + H2O = an N-acyl-L-amino acid + a tRNA + H(+). Hydrolyzes ribosome-free peptidyl-tRNAs (with 1 or more amino acids incorporated), which drop off the ribosome during protein synthesis, or as a result of ribosome stalling. Its function is as follows. Catalyzes the release of premature peptidyl moieties from peptidyl-tRNA molecules trapped in stalled 50S ribosomal subunits, and thus maintains levels of free tRNAs and 50S ribosomes. In Mycobacteroides abscessus (strain ATCC 19977 / DSM 44196 / CCUG 20993 / CIP 104536 / JCM 13569 / NCTC 13031 / TMC 1543 / L948) (Mycobacterium abscessus), this protein is Peptidyl-tRNA hydrolase.